A 360-amino-acid polypeptide reads, in one-letter code: UDP-N-acetylglucosamine--N-acetylmuramyl-(pentapeptide) pyrophosphoryl-undecaprenol N-acetylglucosamine transferase (360 aa).

UDP-N-acetyl-alpha-D-glucosamine is bound by residues 11 to 13 (TGG), Asn-120, Arg-161, Ser-188, and Gln-282.

This sequence belongs to the glycosyltransferase 28 family. MurG subfamily.

It is found in the cell inner membrane. The enzyme catalyses di-trans,octa-cis-undecaprenyl diphospho-N-acetyl-alpha-D-muramoyl-L-alanyl-D-glutamyl-meso-2,6-diaminopimeloyl-D-alanyl-D-alanine + UDP-N-acetyl-alpha-D-glucosamine = di-trans,octa-cis-undecaprenyl diphospho-[N-acetyl-alpha-D-glucosaminyl-(1-&gt;4)]-N-acetyl-alpha-D-muramoyl-L-alanyl-D-glutamyl-meso-2,6-diaminopimeloyl-D-alanyl-D-alanine + UDP + H(+). Its pathway is cell wall biogenesis; peptidoglycan biosynthesis. Functionally, cell wall formation. Catalyzes the transfer of a GlcNAc subunit on undecaprenyl-pyrophosphoryl-MurNAc-pentapeptide (lipid intermediate I) to form undecaprenyl-pyrophosphoryl-MurNAc-(pentapeptide)GlcNAc (lipid intermediate II). This is UDP-N-acetylglucosamine--N-acetylmuramyl-(pentapeptide) pyrophosphoryl-undecaprenol N-acetylglucosamine transferase from Synechococcus sp. (strain RCC307).